The sequence spans 67 residues: DNA-directed RNA polymerase subunit omega (67 aa).

The protein belongs to the RNA polymerase subunit omega family. The RNAP catalytic core consists of 2 alpha, 1 beta, 1 beta' and 1 omega subunit. When a sigma factor is associated with the core the holoenzyme is formed, which can initiate transcription.

It catalyses the reaction RNA(n) + a ribonucleoside 5'-triphosphate = RNA(n+1) + diphosphate. Its function is as follows. Promotes RNA polymerase assembly. Latches the N- and C-terminal regions of the beta' subunit thereby facilitating its interaction with the beta and alpha subunits. In Burkholderia multivorans (strain ATCC 17616 / 249), this protein is DNA-directed RNA polymerase subunit omega.